The primary structure comprises 526 residues: GMP synthase [glutamine-hydrolyzing] (526 aa).

Residues R3–N199 form the Glutamine amidotransferase type-1 domain. The active-site Nucleophile is C83. Residues H174 and E176 contribute to the active site. The region spanning W200 to R392 is the GMPS ATP-PPase domain. An ATP-binding site is contributed by S227–S233.

As to quaternary structure, homodimer.

The catalysed reaction is XMP + L-glutamine + ATP + H2O = GMP + L-glutamate + AMP + diphosphate + 2 H(+). It participates in purine metabolism; GMP biosynthesis; GMP from XMP (L-Gln route): step 1/1. Catalyzes the synthesis of GMP from XMP. The sequence is that of GMP synthase [glutamine-hydrolyzing] from Ehrlichia chaffeensis (strain ATCC CRL-10679 / Arkansas).